Reading from the N-terminus, the 102-residue chain is Large ribosomal subunit protein uL24 (102 aa).

Belongs to the universal ribosomal protein uL24 family. As to quaternary structure, part of the 50S ribosomal subunit.

In terms of biological role, one of two assembly initiator proteins, it binds directly to the 5'-end of the 23S rRNA, where it nucleates assembly of the 50S subunit. Functionally, one of the proteins that surrounds the polypeptide exit tunnel on the outside of the subunit. The protein is Large ribosomal subunit protein uL24 of Limosilactobacillus reuteri (strain DSM 20016) (Lactobacillus reuteri).